A 510-amino-acid polypeptide reads, in one-letter code: Lysine-specific demethylase 4D (510 aa).

One can recognise a JmjN domain in the interval 15 to 57 (IMIFRPTKEEFNDFDKYIAYMESQGAHRAGLAKVIPPKEWRAR). 2 positions are modified to polyADP-ribosyl glutamic acid: glutamate 23 and glutamate 24. Residue tyrosine 133 participates in 2-oxoglutarate binding. Residues 143–309 (DGKTQQWNVG…YGKVASQCSC (167 aa)) form the JmjC domain. Fe cation contacts are provided by histidine 189 and glutamate 191. Residues asparagine 199 and lysine 207 each contribute to the 2-oxoglutarate site. The Zn(2+) site is built by cysteine 235 and histidine 241. Lysine 242 contacts 2-oxoglutarate. Histidine 277 contributes to the Fe cation binding site. Residues cysteine 307 and cysteine 309 each coordinate Zn(2+). A disordered region spans residues 397 to 510 (MCHTSRQAAD…ASEGGLTSDP (114 aa)). Basic and acidic residues predominate over residues 461-471 (RLPEGRDDRSP).

Belongs to the JHDM3 histone demethylase family. Fe(2+) is required as a cofactor. In terms of processing, ubiquitinated via 'Lys-63'-linked ubiquitin chains. Deubiquitinated by USP14 with the help of TRIM14 leading to stabilization.

It is found in the nucleus. The catalysed reaction is N(6),N(6),N(6)-trimethyl-L-lysyl(9)-[histone H3] + 2 2-oxoglutarate + 2 O2 = N(6)-methyl-L-lysyl(9)-[histone H3] + 2 formaldehyde + 2 succinate + 2 CO2. Histone demethylase that specifically demethylates 'Lys-9' of histone H3, thereby playing a central role in histone code. Does not demethylate histone H3 'Lys-4', H3 'Lys-27', H3 'Lys-36' nor H4 'Lys-20'. Demethylates both di- and trimethylated H3 'Lys-9' residue, while it has no activity on monomethylated residues. Demethylation of Lys residue generates formaldehyde and succinate. This Rattus norvegicus (Rat) protein is Lysine-specific demethylase 4D (Kdm4d).